The primary structure comprises 923 residues: Inorganic phosphate transporter PHO87 (923 aa).

Residues 1 to 334 enclose the SPX domain; it reads MRFSHFLKYN…HMNTRQELIE (334 aa). At 1–461 the chain is on the extracellular side; sequence MRFSHFLKYN…KLFFGKRAMK (461 aa). Disordered regions lie at residues 40–74 and 86–107; these read ETPT…SSSK and FGSK…IDGN. Positions 95 to 104 are enriched in basic and acidic residues; the sequence is KRGDSDEKAI. Residue lysine 102 forms a Glycyl lysine isopeptide (Lys-Gly) (interchain with G-Cter in ubiquitin) linkage. Asparagine 162, asparagine 202, and asparagine 274 each carry an N-linked (GlcNAc...) asparagine glycan. Residues 462–482 form a helical membrane-spanning segment; that stretch reads IGFIIIVTGVLLGVKTFNDPV. Topologically, residues 483–493 are cytoplasmic; the sequence is EHRCMALVECC. A helical transmembrane segment spans residues 494-514; that stretch reads AFLWASEAIPLHITGLLVPLL. At 515–537 the chain is on the extracellular side; sequence TVLFRVLKDDDGKVMGAAAASTE. A helical membrane pass occupies residues 538-558; sequence ILGTMWSSTIMILLAGFTLGE. At 559–583 the chain is on the cytoplasmic side; that stretch reads ALSQYNVAKVLASWLLALAGTKPRN. Residues 584-604 traverse the membrane as a helical segment; that stretch reads VLLMAMSVVFFLSMWISNVAS. The Extracellular segment spans residues 605-627; the sequence is PVLTYSLLTPLLDPLDYTSPFAK. The helical transmembrane segment at 628-648 threads the bilayer; sequence ALVMGVALSADIGGMASPISS. The Cytoplasmic segment spans residues 649–667; the sequence is PQNIISMQYLKPYGIGWGQ. The chain crosses the membrane as a helical span at residues 668 to 688; sequence FFAVALPTGILSMLCSWALMI. The Extracellular portion of the chain corresponds to 689-707; it reads LTFKIGKTKLEKFKPIRTR. The chain crosses the membrane as a helical span at residues 708 to 728; the sequence is FTIKQYFIIIVTIATILLWCV. The Cytoplasmic portion of the chain corresponds to 729–735; the sequence is ESQIESA. Residues 736 to 756 form a helical membrane-spanning segment; sequence FGSSGEIAVIPIVLFFGTGLL. Topologically, residues 757-767 are extracellular; the sequence is STKDFNTFPWS. Residues 768 to 788 form a helical membrane-spanning segment; sequence IVVLAMGGIALGKAVSSSGLL. The Cytoplasmic portion of the chain corresponds to 789-802; the sequence is VTIARALQKKIQND. A helical transmembrane segment spans residues 803-823; the sequence is GVFAILCIFGILMLVVGTFVS. At 824 to 849 the chain is on the extracellular side; sequence HTVSAIIIIPLVQEVGDKLSDPKAAP. A helical membrane pass occupies residues 850–870; sequence ILVFGCALLASCGMGLASSGF. Over 871–898 the chain is Cytoplasmic; that stretch reads PNVTAISMTDKKGNRWLTVGAFISRGVP. The chain crosses the membrane as a helical span at residues 899–919; the sequence is ASLLAFVCVITLGYGISSSVL. The Extracellular portion of the chain corresponds to 920-923; the sequence is KGST.

Belongs to the CitM (TC 2.A.11) transporter family.

Its subcellular location is the membrane. Functionally, involved in the uptake of inorganic phosphate. This is Inorganic phosphate transporter PHO87 (PHO87) from Saccharomyces cerevisiae (strain ATCC 204508 / S288c) (Baker's yeast).